The following is a 648-amino-acid chain: Bifunctional protein TilS/HprT (648 aa).

Position 29–34 (29–34 (SGGPDS)) interacts with ATP. Residue aspartate 627 participates in Mg(2+) binding.

This sequence in the N-terminal section; belongs to the tRNA(Ile)-lysidine synthase family. In the C-terminal section; belongs to the purine/pyrimidine phosphoribosyltransferase family. It depends on Mg(2+) as a cofactor.

It localises to the cytoplasm. It carries out the reaction IMP + diphosphate = hypoxanthine + 5-phospho-alpha-D-ribose 1-diphosphate. The enzyme catalyses GMP + diphosphate = guanine + 5-phospho-alpha-D-ribose 1-diphosphate. The catalysed reaction is cytidine(34) in tRNA(Ile2) + L-lysine + ATP = lysidine(34) in tRNA(Ile2) + AMP + diphosphate + H(+). Ligates lysine onto the cytidine present at position 34 of the AUA codon-specific tRNA(Ile) that contains the anticodon CAU, in an ATP-dependent manner. Cytidine is converted to lysidine, thus changing the amino acid specificity of the tRNA from methionine to isoleucine. In Listeria monocytogenes serotype 4b (strain F2365), this protein is Bifunctional protein TilS/HprT (tilS/hprT).